Consider the following 211-residue polypeptide: Ribosomal RNA small subunit methyltransferase G (211 aa).

Residues Gly-72, Phe-77, 125-126, and Arg-141 contribute to the S-adenosyl-L-methionine site; that span reads IE.

This sequence belongs to the methyltransferase superfamily. RNA methyltransferase RsmG family.

It is found in the cytoplasm. It carries out the reaction guanosine(527) in 16S rRNA + S-adenosyl-L-methionine = N(7)-methylguanosine(527) in 16S rRNA + S-adenosyl-L-homocysteine. Specifically methylates the N7 position of guanine in position 527 of 16S rRNA. The polypeptide is Ribosomal RNA small subunit methyltransferase G (Allorhizobium ampelinum (strain ATCC BAA-846 / DSM 112012 / S4) (Agrobacterium vitis (strain S4))).